The chain runs to 458 residues: MGRTPELKLYNTLTREKSAFKPIDAENVRMYVCGPTVYDFAHIGNARPVIVFDVLFRLLRHVYGEDHVTYARNITDVDDKINARALRDHPGLPLNEAIRAVTEKTETQFHADVAELGCLEPSVEPRATDNIAEMIQIIEKLIGNGHAYVAAGEVLFDTKSMADYGELSKRPLDEQQAGARVAVDAHKKNPGDFVLWKLSSHNEPGWESPWGRGRPGWHIECSAMSRRYLGDIFDIHGGGLDLIFPHHENEIAQSRCAHGTEVMANVWMHNGFVQVEGRKMSKSEGNFVTIHDLLHTETFGGRKWPGEVLRLAMLMTHYREPIDFSIKRLEEAERLLAKWPTAEAGDAAPDESVLNALADDLNTVAAVQALHALAQPGNDAVFAASAVLLGVLPKKVEIDEAFAAAVDALVAMRLEVLKAKNFVEADRIRDELGAKGIQLKDGKDPETGERVTTWEVKR.

Cys33 lines the Zn(2+) pocket. Residues 35–45 carry the 'HIGH' region motif; the sequence is PTVYDFAHIGN. Zn(2+) is bound by residues Cys221, His246, and Glu250. A 'KMSKS' region motif is present at residues 279–283; sequence KMSKS. Lys282 contributes to the ATP binding site.

It belongs to the class-I aminoacyl-tRNA synthetase family. Monomer. The cofactor is Zn(2+).

It is found in the cytoplasm. It catalyses the reaction tRNA(Cys) + L-cysteine + ATP = L-cysteinyl-tRNA(Cys) + AMP + diphosphate. This chain is Cysteine--tRNA ligase, found in Rhizobium etli (strain ATCC 51251 / DSM 11541 / JCM 21823 / NBRC 15573 / CFN 42).